Consider the following 443-residue polypeptide: Methyl-coenzyme M reductase subunit beta (443 aa).

Tyrosine 367 is a coenzyme M binding site. Glycine 369 provides a ligand contact to coenzyme B.

Belongs to the methyl-coenzyme M reductase beta subunit family. MCR is a hexamer of two alpha, two beta, and two gamma chains, forming a dimer of heterotrimers. The cofactor is coenzyme F430.

It is found in the cytoplasm. It catalyses the reaction coenzyme B + methyl-coenzyme M = methane + coenzyme M-coenzyme B heterodisulfide. It functions in the pathway one-carbon metabolism; methyl-coenzyme M reduction; methane from methyl-coenzyme M: step 1/1. Its function is as follows. Component of the methyl-coenzyme M reductase (MCR) I that catalyzes the reductive cleavage of methyl-coenzyme M (CoM-S-CH3 or 2-(methylthio)ethanesulfonate) using coenzyme B (CoB or 7-mercaptoheptanoylthreonine phosphate) as reductant which results in the production of methane and the mixed heterodisulfide of CoB and CoM (CoM-S-S-CoB). This is the final step in methanogenesis. The polypeptide is Methyl-coenzyme M reductase subunit beta (mcrB) (Methanococcus vannielii).